We begin with the raw amino-acid sequence, 71 residues long: MAFYRRRISPIPPGQPIDYKDVDLLRRFITERGKILPRRVTGLTAKQQRQLAVAIKRARIMALLPFLNLEG.

The protein belongs to the bacterial ribosomal protein bS18 family. In terms of assembly, part of the 30S ribosomal subunit. Forms a tight heterodimer with protein bS6.

Functionally, binds as a heterodimer with protein bS6 to the central domain of the 16S rRNA, where it helps stabilize the platform of the 30S subunit. The sequence is that of Small ribosomal subunit protein bS18 from Thermosynechococcus vestitus (strain NIES-2133 / IAM M-273 / BP-1).